A 321-amino-acid polypeptide reads, in one-letter code: MGRKKISLIGGGQIGGVLAQLCALRELGDVVMFDIVEGMPQGKMLDIAEASPVDGFDVCLQGTQDYKDIAGSDVVIVTAGLPRKPGMSRDDLIATNSKIMTSVAEGIKQYASNAFVIIISNPLDAMVTLCQKITGMPANRVVGQAGVLDSARFKAFIAWELGVSVKDVSAMTLGGHGDDMVPLVRYAAVNGIPVMELLEQKYGAEKAKEVMEAMVNRTRLAGGEVVALLKTGSAFYSPASSAIAMAESVLKDQKRVLPTCCLLNGEFGVNGYYVGVPAVLGASGVEKILQFKLDATEQAMMDKSVAAVKGLVDSLDSILKG.

NAD(+) is bound by residues 10–15 (GGGQIG) and aspartate 34. Positions 83 and 89 each coordinate substrate. Residues asparagine 96 and 119–121 (ISN) contribute to the NAD(+) site. Residues asparagine 121 and arginine 152 each contribute to the substrate site. Histidine 176 serves as the catalytic Proton acceptor.

This sequence belongs to the LDH/MDH superfamily. MDH type 3 family.

The catalysed reaction is (S)-malate + NAD(+) = oxaloacetate + NADH + H(+). Its function is as follows. Catalyzes the reversible oxidation of malate to oxaloacetate. This is Malate dehydrogenase from Trichlorobacter lovleyi (strain ATCC BAA-1151 / DSM 17278 / SZ) (Geobacter lovleyi).